The chain runs to 333 residues: Quinolinate synthase (333 aa).

Iminosuccinate contacts are provided by H41 and S58. C103 provides a ligand contact to [4Fe-4S] cluster. Residues 129–131 (YIN) and S146 contribute to the iminosuccinate site. C189 provides a ligand contact to [4Fe-4S] cluster. Residues 215-217 (HPE) and T232 contribute to the iminosuccinate site. C282 is a [4Fe-4S] cluster binding site.

This sequence belongs to the quinolinate synthase family. Type 2 subfamily. The cofactor is [4Fe-4S] cluster.

Its subcellular location is the cytoplasm. The enzyme catalyses iminosuccinate + dihydroxyacetone phosphate = quinolinate + phosphate + 2 H2O + H(+). It functions in the pathway cofactor biosynthesis; NAD(+) biosynthesis; quinolinate from iminoaspartate: step 1/1. Catalyzes the condensation of iminoaspartate with dihydroxyacetone phosphate to form quinolinate. The chain is Quinolinate synthase from Prochlorococcus marinus (strain MIT 9313).